Here is a 491-residue protein sequence, read N- to C-terminus: Putative diacyglycerol O-acyltransferase MT2557 (491 aa).

His145 serves as the catalytic Proton acceptor.

It belongs to the long-chain O-acyltransferase family.

It catalyses the reaction an acyl-CoA + a 1,2-diacyl-sn-glycerol = a triacyl-sn-glycerol + CoA. The protein operates within glycerolipid metabolism; triacylglycerol biosynthesis. This chain is Putative diacyglycerol O-acyltransferase MT2557, found in Mycobacterium tuberculosis (strain CDC 1551 / Oshkosh).